Here is a 145-residue protein sequence, read N- to C-terminus: ATP synthase epsilon chain (145 aa).

The protein belongs to the ATPase epsilon chain family. F-type ATPases have 2 components, CF(1) - the catalytic core - and CF(0) - the membrane proton channel. CF(1) has five subunits: alpha(3), beta(3), gamma(1), delta(1), epsilon(1). CF(0) has three main subunits: a, b and c.

Its subcellular location is the cell inner membrane. In terms of biological role, produces ATP from ADP in the presence of a proton gradient across the membrane. In Francisella tularensis subsp. tularensis (strain FSC 198), this protein is ATP synthase epsilon chain.